A 298-amino-acid polypeptide reads, in one-letter code: Mitochondrial nicotinamide adenine dinucleotide transporter SLC25A51 (298 aa).

Basic and acidic residues predominate over residues 1 to 11 (MMDSEAHEKRP). The interval 1–21 (MMDSEAHEKRPPMLTSSNQDL) is disordered. Solcar repeat units follow at residues 28-108 (VGDM…LSRL), 117-201 (PEFA…IKES), and 214-297 (NDFI…LLKI). 6 consecutive transmembrane segments (helical) span residues 36–56 (CGYC…KILF), 85–105 (LPPL…YEDL), 119–139 (FATR…LTPF), 180–200 (ILFR…PIKE), 216–236 (FICG…INVV), and 269–290 (LFRG…INAT).

Belongs to the mitochondrial carrier (TC 2.A.29) family.

It is found in the mitochondrion inner membrane. It catalyses the reaction NAD(+)(in) = NAD(+)(out). Functionally, mitochondrial membrane carrier protein that mediates the import of NAD(+) into mitochondria. Mitochondrial NAD(+) is required for glycolysis and mitochondrial respiration. Compared to SLC25A52, SLC25A51-mediated transport is essential for the import of NAD(+) in mitochondria. The transport mechanism, uniport or antiport, its electrogenicity and substrate selectivity, remain to be elucidated. This chain is Mitochondrial nicotinamide adenine dinucleotide transporter SLC25A51, found in Mus musculus (Mouse).